The chain runs to 127 residues: MIKKIIFGIAILLSTSCFANSTTSDGSKKDAAKTNDITTQKIIDDFSAYAGTIKPEVREEIQKYRVAIVKINKKKRELYNRLSKEAQNFLAEQQKYKQKLSISKLTVENDQKNNTADSNDNKSKDTK.

An N-terminal signal peptide occupies residues 1–16 (MIKKIIFGIAILLSTS). The N-palmitoyl cysteine moiety is linked to residue Cys-17. Cys-17 carries the S-diacylglycerol cysteine lipid modification. Residues 56-101 (EVREEIQKYRVAIVKINKKKRELYNRLSKEAQNFLAEQQKYKQKLS) are a coiled coil. Over residues 107 to 118 (VENDQKNNTADS) the composition is skewed to polar residues. The disordered stretch occupies residues 107-127 (VENDQKNNTADSNDNKSKDTK).

It localises to the cell membrane. This is an uncharacterized protein from Rickettsia conorii (strain ATCC VR-613 / Malish 7).